The chain runs to 219 residues: Proteasome subunit beta type-9 (219 aa).

The propeptide at 1 to 20 is removed in mature form; sequence MLRAGAPTAGSFRTEEVHTG. Threonine 21 (nucleophile) is an active-site residue. 2 positions are modified to N6-acetyllysine: lysine 53 and lysine 109.

It belongs to the peptidase T1B family. The 26S proteasome consists of a 20S proteasome core and two 19S regulatory subunits. The 20S proteasome core is composed of 28 subunits that are arranged in four stacked rings, resulting in a barrel-shaped structure. The two end rings are each formed by seven alpha subunits, and the two central rings are each formed by seven beta subunits. The catalytic chamber with the active sites is on the inside of the barrel. Component of the immunoproteasome, where it displaces the equivalent housekeeping subunit PSMB6. Component of the spermatoproteasome, a form of the proteasome specifically found in testis. Autocleaved. The resulting N-terminal Thr residue of the mature subunit is responsible for the nucleophile proteolytic activity.

Its subcellular location is the cytoplasm. The protein localises to the nucleus. It catalyses the reaction Cleavage of peptide bonds with very broad specificity.. Its function is as follows. The proteasome is a multicatalytic proteinase complex which is characterized by its ability to cleave peptides with Arg, Phe, Tyr, Leu, and Glu adjacent to the leaving group at neutral or slightly basic pH. The proteasome has an ATP-dependent proteolytic activity. This subunit is involved in antigen processing to generate class I binding peptides. The chain is Proteasome subunit beta type-9 (Psmb9) from Mus terricolor (Earth-colored mouse).